The chain runs to 766 residues: Probable serine/threonine-protein kinase KKQ8 (766 aa).

Disordered regions lie at residues 1 to 165, 201 to 240, 277 to 297, 362 to 384, and 417 to 437; these read MPEH…DTSS, GHYAPGFIQPPKSPTSSRVPSRSNSRKGREHAGTVSAAQL, SDANGNSHNHASKNDGHLDLP, TRSHVQSGSDDSSDDDEELDDPS, and AAKNKHNQSSKHRTPSGAGVQ. The span at 14 to 25 shows a compositional bias: low complexity; that stretch reads RSLSLGSSMRSL. Residues 49 to 64 are compositionally biased toward basic and acidic residues; it reads VDIRVDTASASREHTP. Residues 94–120 show a composition bias toward polar residues; sequence LTPTNSNPQSKSGSPVSQNTSQESLIT. Residues 127-137 show a composition bias toward basic and acidic residues; the sequence is EDYRPSKDSRR. 2 stretches are compositionally biased toward polar residues: residues 140 to 165 and 214 to 223; these read RNASPMSSNGNLPINANTVIGPDTSS and PTSSRVPSRS. Residues 288–297 show a composition bias toward basic and acidic residues; that stretch reads SKNDGHLDLP. Residues 372–382 are compositionally biased toward acidic residues; it reads DSSDDDEELDD. A compositionally biased stretch (basic residues) spans 419–430; that stretch reads KNKHNQSSKHRT. Positions 449–752 constitute a Protein kinase domain; sequence GKCVAVVGHG…IDKLLQTGWM (304 aa). ATP-binding positions include 455 to 463 and Lys493; that span reads VGHGAYGVV. Catalysis depends on Asp603, which acts as the Proton acceptor.

Belongs to the protein kinase superfamily. CAMK Ser/Thr protein kinase family. NPR/HAL subfamily. HAL5 sub-subfamily.

The protein localises to the cytoplasm. The catalysed reaction is L-seryl-[protein] + ATP = O-phospho-L-seryl-[protein] + ADP + H(+). It carries out the reaction L-threonyl-[protein] + ATP = O-phospho-L-threonyl-[protein] + ADP + H(+). The sequence is that of Probable serine/threonine-protein kinase KKQ8 (KKQ8) from Candida glabrata (strain ATCC 2001 / BCRC 20586 / JCM 3761 / NBRC 0622 / NRRL Y-65 / CBS 138) (Yeast).